The following is an 822-amino-acid chain: Tubulin polyglutamylase TTLL6 (822 aa).

Residues 1-24 are disordered; sequence MLQCLTSESEEGAEEREESSTEDL. Acidic residues predominate over residues 8–24; sequence ESEEGAEEREESSTEDL. Positions 57–400 constitute a TTL domain; sequence KKRLVINLSN…GNCDKKKVLE (344 aa). ATP is bound by residues Lys174, 180–181, 202–205, and 215–217; these read QG, QLYI, and KFD. Residue Gln180 coordinates a protein. Arg241 is a binding site for L-glutamate. 263-264 lines the ATP pocket; the sequence is TN. 3 residues coordinate L-glutamate: Tyr265, Ser266, and Lys283. Residues Asp346, Glu359, and Asn361 each coordinate Mg(2+). His362 contacts a protein. The segment at 371–450 is c-MTBD region; sequence KLDKEVKDSL…CGGFRLIYPG (80 aa). Lys377 lines the L-glutamate pocket. Disordered regions lie at residues 736–772 and 791–822; these read PLFPAPKSQYPTLSKERCPHSRSSSRKKEMNSPSVFV and TQARLDPRPSRSHSGTTTRDSSTQDPKHTATA. A compositionally biased stretch (polar residues) spans 802-814; the sequence is SHSGTTTRDSSTQ.

Belongs to the tubulin--tyrosine ligase family. Found in a complex with CEP41. The cofactor is Mg(2+). As to expression, highly expressed in testis. Expressed in brain, heart, kidney, liver, lung, muscle and trachea. In the brain, specifically expressed in ependymal cilia.

It localises to the cytoplasm. It is found in the cytoskeleton. The protein localises to the cilium axoneme. Its subcellular location is the cilium basal body. The catalysed reaction is L-glutamyl-[protein] + L-glutamate + ATP = gamma-L-glutamyl-L-glutamyl-[protein] + ADP + phosphate + H(+). The enzyme catalyses (L-glutamyl)(n)-gamma-L-glutamyl-L-glutamyl-[protein] + L-glutamate + ATP = (L-glutamyl)(n+1)-gamma-L-glutamyl-L-glutamyl-[protein] + ADP + phosphate + H(+). Polyglutamylase which modifies both tubulin and non-tubulin proteins, generating alpha-linked polyglutamate side chains on the gamma-carboxyl group of specific glutamate residues of target proteins. Preferentially mediates ATP-dependent long polyglutamate chain elongation over the initiation step of the polyglutamylation reaction. Preferentially modifies the alpha-tubulin tail over a beta-tail. Promotes tubulin polyglutamylation which stimulates spastin/SPAST-mediated microtubule severing, thereby regulating microtubule functions. Mediates microtubule polyglutamylation in primary cilia axoneme which is important for ciliary structural formation and motility. Mediates microtubule polyglutamylation in motile cilia, necessary for the regulation of ciliary coordinated beating. Polyglutamylates non-tubulin protein nucleotidyltransferase CGAS, leading to CGAS DNA-binding inhibition, thereby preventing antiviral defense response. In Mus musculus (Mouse), this protein is Tubulin polyglutamylase TTLL6.